A 1257-amino-acid chain; its full sequence is Insulin receptor substrate 4 (1257 aa).

The region spanning 78 to 199 (EVCKRGYLRK…WYLLLSRLIL (122 aa)) is the PH domain. One can recognise an IRS-type PTB domain in the interval 231–335 (YKDVWQVIVK…EKMRALCADE (105 aa)). Disordered regions lie at residues 406 to 653 (VAHS…GGRF), 678 to 921 (IPEG…SSDY), and 1179 to 1257 (QDVA…KRGR). Residues 408 to 424 (HSRRGRLHLPRGRRSRR) show a composition bias toward basic residues. The YXXM motif 1 motif lies at 487–490 (YMPM). The segment covering 495 to 509 (SGNGRGSGGGQGSNG) has biased composition (gly residues). Residues 510–524 (QGSSSHSSGGNQCSG) show a composition bias toward low complexity. Gly residues-rich tracts occupy residues 525–542 (EGQG…GSGG) and 551–599 (GTAG…SGKG). Residues 627-640 (MPPPPPPPPPPPPA) show a composition bias toward pro residues. The span at 641-650 (GGTGGKGKSG) shows a compositional bias: gly residues. A CRK-binding region spans residues 678 to 800 (IPEGAARGPH…KNPRNPQGGS (123 aa)). Short sequence motifs (YXXM motif) lie at residues 700–703 (YVPM), 717–720 (YMPM), and 743–746 (YMMM). A compositionally biased stretch (pro residues) spans 750–761 (VSPPPAPSPPKA). Positions 763–774 (DTNKEDDSKDND) are enriched in basic and acidic residues. Positions 779-782 (YMFM) match the YXXM motif 5 motif. Over residues 800–810 (SSSKSWSSYFS) the composition is skewed to low complexity. The segment covering 815 to 826 (FRSSPLGQNDNS) has biased composition (polar residues). The short motif at 828-831 (YVPM) is the YXXM motif 6 element. A compositionally biased stretch (basic and acidic residues) spans 840 to 855 (GLDKEVSYNWDPKDAA). The segment at 895-897 (ITK) is GRB2-binding. Phosphotyrosine is present on tyrosine 921. Positions 921-924 (YVNM) match the YXXM motif 7 motif. Basic and acidic residues predominate over residues 1236–1257 (DTHVRMDFARRDNQFDSPKRGR).

As to quaternary structure, interacts with SOCS6 in response to stimulation with either insulin or IGF1. Interacts with CRK and CRKL. Interaction with CRK is stronger than with CRKL. Interacts with CRK via the phosphorylated YXXM motifs. Interacts with GRB2 and PIK3R1. Interacts with PLC-gamma, SHC1, PTK6, PPP4C and NISCH. Interacts with ASB4; this interaction promotes IRS4 proteasomal degradation. Post-translationally, phosphorylated on tyrosine residues in response to both insulin and IGF1 signaling. Phosphorylated on Tyr-921 in response to FGF2 signaling. Phosphorylation of Tyr-921 is required for GRB2, phospholipase C-gamma and phosphatidylinositol 3-kinase interaction. In terms of processing, ubiquitinated in a ASB4-dependent manner, leading to proteasomal degradation. In terms of tissue distribution, expressed in myoblasts. Expressed in liver and hepatocellular carcinoma.

The protein localises to the cell membrane. Acts as an interface between multiple growth factor receptors possessing tyrosine kinase activity, such as insulin receptor, IGF1R and FGFR1, and a complex network of intracellular signaling molecules containing SH2 domains. Involved in the IGF1R mitogenic signaling pathway. Promotes the AKT1 signaling pathway and BAD phosphorylation during insulin stimulation without activation of RPS6KB1 or the inhibition of apoptosis. Interaction with GRB2 enhances insulin-stimulated mitogen-activated protein kinase activity. May be involved in nonreceptor tyrosine kinase signaling in myoblasts. Plays a pivotal role in the proliferation/differentiation of hepatoblastoma cell through EPHB2 activation upon IGF1 stimulation. May play a role in the signal transduction in response to insulin and to a lesser extent in response to IL4 and GH on mitogenesis. Plays a role in growth, reproduction and glucose homeostasis. May act as negative regulators of the IGF1 signaling pathway by suppressing the function of IRS1 and IRS2. The sequence is that of Insulin receptor substrate 4 (IRS4) from Homo sapiens (Human).